Consider the following 304-residue polypeptide: Homoserine kinase (304 aa).

86-96 (PLARGLGSSAA) contributes to the ATP binding site.

It belongs to the GHMP kinase family. Homoserine kinase subfamily.

The protein resides in the cytoplasm. It carries out the reaction L-homoserine + ATP = O-phospho-L-homoserine + ADP + H(+). It participates in amino-acid biosynthesis; L-threonine biosynthesis; L-threonine from L-aspartate: step 4/5. Catalyzes the ATP-dependent phosphorylation of L-homoserine to L-homoserine phosphate. In Carboxydothermus hydrogenoformans (strain ATCC BAA-161 / DSM 6008 / Z-2901), this protein is Homoserine kinase.